Reading from the N-terminus, the 186-residue chain is Threonylcarbamoyl-AMP synthase (186 aa).

In terms of domain architecture, YrdC-like spans 2–186 (STEFEQAVAA…ARTGAVIRPS (185 aa)).

It belongs to the SUA5 family. TsaC subfamily.

The protein localises to the cytoplasm. The catalysed reaction is L-threonine + hydrogencarbonate + ATP = L-threonylcarbamoyladenylate + diphosphate + H2O. Functionally, required for the formation of a threonylcarbamoyl group on adenosine at position 37 (t(6)A37) in tRNAs that read codons beginning with adenine. Catalyzes the conversion of L-threonine, HCO(3)(-)/CO(2) and ATP to give threonylcarbamoyl-AMP (TC-AMP) as the acyladenylate intermediate, with the release of diphosphate. The sequence is that of Threonylcarbamoyl-AMP synthase from Aeromonas salmonicida (strain A449).